We begin with the raw amino-acid sequence, 465 residues long: A-type ATP synthase subunit B (465 aa).

It belongs to the ATPase alpha/beta chains family. In terms of assembly, the A-type ATPase is composed of subunits A(3), B(3), C, D, E(1 or 2), F, H(2), I and proteolipid K(x).

The protein localises to the cell membrane. Component of the A-type ATP synthase that produces ATP from ADP in the presence of a proton gradient across the membrane. The B chain is a regulatory subunit. This chain is A-type ATP synthase subunit B, found in Methanocaldococcus jannaschii (strain ATCC 43067 / DSM 2661 / JAL-1 / JCM 10045 / NBRC 100440) (Methanococcus jannaschii).